The chain runs to 108 residues: UPF0060 membrane protein YnfA (108 aa).

Residues 1–5 (MIKTT) are Periplasmic-facing. Residues 6–26 (LLFFATALCEIIGCFLPWLWL) form a helical membrane-spanning segment. Over 27–30 (KRNA) the chain is Cytoplasmic. A helical membrane pass occupies residues 31 to 51 (SIWLLLPAGISLALFVWLLTL). The Periplasmic portion of the chain corresponds to 52-60 (HPAASGRIY). Residues 61 to 81 (AAYGGVYVCTALMWLRVVDGV) traverse the membrane as a helical segment. Topologically, residues 82-84 (KLT) are cytoplasmic. The helical transmembrane segment at 85-105 (LYDWTGALIALCGMLIIVAGW) threads the bilayer. Residues 106–108 (GRT) are Periplasmic-facing.

Belongs to the UPF0060 family.

It is found in the cell inner membrane. The chain is UPF0060 membrane protein YnfA from Shigella dysenteriae serotype 1 (strain Sd197).